Consider the following 172-residue polypeptide: 3-hydroxydecanoyl-[acyl-carrier-protein] dehydratase (172 aa).

Residue H70 is part of the active site.

This sequence belongs to the thioester dehydratase family. FabA subfamily. In terms of assembly, homodimer.

The protein resides in the cytoplasm. It carries out the reaction a (3R)-hydroxyacyl-[ACP] = a (2E)-enoyl-[ACP] + H2O. The catalysed reaction is (3R)-hydroxydecanoyl-[ACP] = (2E)-decenoyl-[ACP] + H2O. It catalyses the reaction (2E)-decenoyl-[ACP] = (3Z)-decenoyl-[ACP]. It participates in lipid metabolism; fatty acid biosynthesis. Functionally, necessary for the introduction of cis unsaturation into fatty acids. Catalyzes the dehydration of (3R)-3-hydroxydecanoyl-ACP to E-(2)-decenoyl-ACP and then its isomerization to Z-(3)-decenoyl-ACP. Can catalyze the dehydratase reaction for beta-hydroxyacyl-ACPs with saturated chain lengths up to 16:0, being most active on intermediate chain length. This is 3-hydroxydecanoyl-[acyl-carrier-protein] dehydratase from Xylella fastidiosa (strain M23).